The following is a 313-amino-acid chain: Ribonuclease Z (313 aa).

Residues His63, His65, Asp67, His68, His142, Asp212, and His270 each contribute to the Zn(2+) site. The active-site Proton acceptor is Asp67.

It belongs to the RNase Z family. In terms of assembly, homodimer. Zn(2+) is required as a cofactor.

It catalyses the reaction Endonucleolytic cleavage of RNA, removing extra 3' nucleotides from tRNA precursor, generating 3' termini of tRNAs. A 3'-hydroxy group is left at the tRNA terminus and a 5'-phosphoryl group is left at the trailer molecule.. Its function is as follows. Zinc phosphodiesterase, which displays some tRNA 3'-processing endonuclease activity. Probably involved in tRNA maturation, by removing a 3'-trailer from precursor tRNA. This is Ribonuclease Z from Enterococcus faecalis (strain ATCC 700802 / V583).